The primary structure comprises 880 residues: Alanine--tRNA ligase (880 aa).

Zn(2+)-binding residues include H566, H570, C668, and H672.

Belongs to the class-II aminoacyl-tRNA synthetase family. The cofactor is Zn(2+).

The protein localises to the cytoplasm. The enzyme catalyses tRNA(Ala) + L-alanine + ATP = L-alanyl-tRNA(Ala) + AMP + diphosphate. Catalyzes the attachment of alanine to tRNA(Ala) in a two-step reaction: alanine is first activated by ATP to form Ala-AMP and then transferred to the acceptor end of tRNA(Ala). Also edits incorrectly charged Ser-tRNA(Ala) and Gly-tRNA(Ala) via its editing domain. This Nostoc sp. (strain PCC 7120 / SAG 25.82 / UTEX 2576) protein is Alanine--tRNA ligase.